The primary structure comprises 412 residues: Serine hydroxymethyltransferase (412 aa).

Residues Leu-125 and 129 to 131 (GHL) each bind (6S)-5,6,7,8-tetrahydrofolate. Residue Lys-234 is modified to N6-(pyridoxal phosphate)lysine. Glu-250 contacts (6S)-5,6,7,8-tetrahydrofolate.

The protein belongs to the SHMT family. Homodimer. It depends on pyridoxal 5'-phosphate as a cofactor.

The protein resides in the cytoplasm. It catalyses the reaction (6R)-5,10-methylene-5,6,7,8-tetrahydrofolate + glycine + H2O = (6S)-5,6,7,8-tetrahydrofolate + L-serine. The protein operates within one-carbon metabolism; tetrahydrofolate interconversion. It functions in the pathway amino-acid biosynthesis; glycine biosynthesis; glycine from L-serine: step 1/1. Its function is as follows. Catalyzes the reversible interconversion of serine and glycine with tetrahydrofolate (THF) serving as the one-carbon carrier. This reaction serves as the major source of one-carbon groups required for the biosynthesis of purines, thymidylate, methionine, and other important biomolecules. Also exhibits THF-independent aldolase activity toward beta-hydroxyamino acids, producing glycine and aldehydes, via a retro-aldol mechanism. The sequence is that of Serine hydroxymethyltransferase from Deinococcus geothermalis (strain DSM 11300 / CIP 105573 / AG-3a).